The sequence spans 291 residues: Protein ILRUN (291 aa).

Residues 199-291 form a disordered region; that stretch reads NTQPHRKVEG…LHGPYPFGQS (93 aa). The segment covering 212-228 has biased composition (polar residues); sequence PFASPQKNRQSDENNLT. Phosphoserine is present on residues Ser215, Ser222, and Ser265. Residues 257–276 are compositionally biased toward low complexity; sequence LSQSSVNLSPSSPANNLSVV.

Interacts with IRF3; the interaction inhibits IRF3 binding to its DNA consensus sequence.

Its subcellular location is the cytoplasm. The protein resides in the nucleus. In terms of biological role, negative regulator of innate antiviral response. Blocks IRF3-dependent cytokine production such as IFNA, IFNB and TNF. Interacts with IRF3 and inhibits IRF3 recruitment to type I IFN promoter sequences while also reducing nuclear levels of the coactivators EP300 and CREBBP. This is Protein ILRUN from Mus musculus (Mouse).